A 958-amino-acid chain; its full sequence is MTQTLTQLEYRDEFIRRHIGSSPEQIKEMLDVVGISSLNELTQKIVPDNIQLATPPNVGGGATEQEALAELKAIARKNKRFTSYIGMGYAPSVLPPVILRNLLENPGWYTAYTPYQPEVSQGRLESLLNFQQVTIDYTGMDLASASLLDEATAAAEAMAMAKRVSKLKNAERFFVADDIHPQTLDVVKTRANTFGFEVIVDKAEKVLELEGVFGVLLQQVGTTGEIHDYSQLISELKTRKIITSVAADLMALVLLTAPGQQGADIVLGSAQRFGVPMGYGGPHAAFFACRDEYKRAMPGRIIGVSRDAAGNRALRMAMQTREQHIRREKANSNICTSQVLLANIAAMYAVYHGPEGLKNIAQRIHRLTDILAAGLIQNGMTLRHQTWFDTLTVETADKAGVLQRAKDAEINLRTDIVGAVGVTLSEVTTREDVVRLIEIISGKAFSDDIDTLDALVASSSTSIPTAMLRKDAVLTHENFHLYHSETEMMRYMHRLENKDLALNQAMIPLGSCTMKLNAAAEMLPITWPEFTEMHPFCPPYQAQGYQIMIEQLSNWLAAITGYDAMCMQPNSGAQGEYAGLLAIRRYHQSRGEGNRHICLIPSSAHGTNPASAHMAGMTVVVVGCDENGNIDIADLKAKAEKHQAELSCVMVTYPSTHGVYEEGIREVCEIIHQYGGQVYLDGANMNAQVGITTPGFIGSDVSHLNLHKTFCIPHGGGGPGMGPIGVKAHLAPFVPGHSVVEMDGVTTQGAVSAAQFGSASILPISWMYIRMMGSEGLKQASQVAILNANYIAQRLKDDYDILYSGAEGYVAHECIIDIRPLKANYGISEMDVAKRLIDYGFHAPTMSFPVAGTLMIEPTESESKVEIDRFIDALLSIRAEIAQVDDGVWPIDDNPLVNAPHTQYELVQEWSHSYSRECAVFPSEATKRNKYWPAVKRLDDVYGDRHLHCSCAPISDYE.

K708 carries the N6-(pyridoxal phosphate)lysine modification.

The protein belongs to the GcvP family. As to quaternary structure, the glycine cleavage system is composed of four proteins: P, T, L and H. It depends on pyridoxal 5'-phosphate as a cofactor.

It carries out the reaction N(6)-[(R)-lipoyl]-L-lysyl-[glycine-cleavage complex H protein] + glycine + H(+) = N(6)-[(R)-S(8)-aminomethyldihydrolipoyl]-L-lysyl-[glycine-cleavage complex H protein] + CO2. The glycine cleavage system catalyzes the degradation of glycine. The P protein binds the alpha-amino group of glycine through its pyridoxal phosphate cofactor; CO(2) is released and the remaining methylamine moiety is then transferred to the lipoamide cofactor of the H protein. In Proteus mirabilis (strain HI4320), this protein is Glycine dehydrogenase (decarboxylating).